The following is a 304-amino-acid chain: Type II restriction enzyme LlaDCHI (304 aa).

This sequence belongs to the DpnII type II restriction endonuclease family.

It catalyses the reaction Endonucleolytic cleavage of DNA to give specific double-stranded fragments with terminal 5'-phosphates.. Its function is as follows. A P subtype restriction enzyme that recognizes the double-stranded unmethylated sequence 5'-GATC-3' and cleaves before G-1. The sequence is that of Type II restriction enzyme LlaDCHI (llaDCHIR) from Lactococcus lactis subsp. cremoris (Streptococcus cremoris).